We begin with the raw amino-acid sequence, 468 residues long: Anthocyanidin 3-O-glucoside 2'''-O-xylosyltransferase (468 aa).

Residues S284, I344–Q346, H361–E369, and H383–Q386 each bind UDP-alpha-D-xylose.

The protein belongs to the UDP-glycosyltransferase family.

The catalysed reaction is an anthocyanidin 3-O-beta-D-glucoside + UDP-alpha-D-xylose = an anthocyanidin 3-O-beta-D-sambubioside + UDP + 2 H(+). It functions in the pathway secondary metabolite biosynthesis; flavonoid biosynthesis. Its function is as follows. Contributes to the last few anthocyanin biosynthetic steps. Converts cyanidin 3-O-glucoside to cyanidin 3-O-xylosyl(1-&gt;2)glucoside. Can use 3-O-glucosylated anthocyanidins/flavonols and uridine diphosphate (UDP)-xylose as substrates. The polypeptide is Anthocyanidin 3-O-glucoside 2'''-O-xylosyltransferase (A3G2XYLT) (Arabidopsis thaliana (Mouse-ear cress)).